Reading from the N-terminus, the 145-residue chain is Transcription antitermination protein NusB (145 aa).

It belongs to the NusB family.

In terms of biological role, involved in transcription antitermination. Required for transcription of ribosomal RNA (rRNA) genes. Binds specifically to the boxA antiterminator sequence of the ribosomal RNA (rrn) operons. This is Transcription antitermination protein NusB from Geotalea uraniireducens (strain Rf4) (Geobacter uraniireducens).